The following is a 387-amino-acid chain: MSVIKMTDLDLAGKRVLIRADLNVPVKDGKVTSDARIRASLPTIETALKQGAKVMVTSHLGRPTEGEYNEEFSLLPVVNYLKDKLSAPVRLAKDYLDGVEIAAGELVVLENVRFNKGEKKDDETLSKKYAALCDVYVMDAFGTAHRAQASTHGVGKFAPIACAGPLLSAELEALGKALGNPARPMVAIVGGSKVSTKLTVLGALSKIADQLIVGGGIANTFVAAQGNNVGKSLYEADLIPEAKRLLETCDIPVPTDVRVATEFSETATATLKPANQIKDDEQILDLGDESAERLAEILKNAKTILWNGPVGVFEFPNFRKGTEIVARAIAESEAFSIAGGGDTLAAIDLFGIADQISYISTGGGAFLEFVEGKKLPAVVMLEERAKQ.

Substrate-binding positions include 21-23 (DLN), Arg-36, 59-62 (HLGR), Arg-113, and Arg-146. ATP is bound by residues Lys-197, Glu-314, and 340–343 (GGDT).

This sequence belongs to the phosphoglycerate kinase family. In terms of assembly, monomer.

It is found in the cytoplasm. It carries out the reaction (2R)-3-phosphoglycerate + ATP = (2R)-3-phospho-glyceroyl phosphate + ADP. Its pathway is carbohydrate degradation; glycolysis; pyruvate from D-glyceraldehyde 3-phosphate: step 2/5. The polypeptide is Phosphoglycerate kinase (Yersinia enterocolitica serotype O:8 / biotype 1B (strain NCTC 13174 / 8081)).